We begin with the raw amino-acid sequence, 263 residues long: 3-methyl-2-oxobutanoate hydroxymethyltransferase (263 aa).

Mg(2+) contacts are provided by D46 and D85. 3-methyl-2-oxobutanoate contacts are provided by residues 46–47 (DS), D85, and K115. A Mg(2+)-binding site is contributed by E117. E180 acts as the Proton acceptor in catalysis.

Belongs to the PanB family. As to quaternary structure, homodecamer; pentamer of dimers. The cofactor is Mg(2+).

It is found in the cytoplasm. It catalyses the reaction 3-methyl-2-oxobutanoate + (6R)-5,10-methylene-5,6,7,8-tetrahydrofolate + H2O = 2-dehydropantoate + (6S)-5,6,7,8-tetrahydrofolate. It functions in the pathway cofactor biosynthesis; (R)-pantothenate biosynthesis; (R)-pantoate from 3-methyl-2-oxobutanoate: step 1/2. Functionally, catalyzes the reversible reaction in which hydroxymethyl group from 5,10-methylenetetrahydrofolate is transferred onto alpha-ketoisovalerate to form ketopantoate. The sequence is that of 3-methyl-2-oxobutanoate hydroxymethyltransferase from Desulforapulum autotrophicum (strain ATCC 43914 / DSM 3382 / VKM B-1955 / HRM2) (Desulfobacterium autotrophicum).